A 178-amino-acid polypeptide reads, in one-letter code: Cytochrome b6-f complex iron-sulfur subunit (178 aa).

A helical transmembrane segment spans residues 20–42 (LLTFGSVTGVALGALYPVVNYFI). The region spanning 65–161 (ATGWLSSHPE…VSVENDNVFV (97 aa)) is the Rieske domain. The [2Fe-2S] cluster site is built by C107, H109, C125, and H128. A disulfide bridge connects residues C112 and C127.

Belongs to the Rieske iron-sulfur protein family. As to quaternary structure, the 4 large subunits of the cytochrome b6-f complex are cytochrome b6, subunit IV (17 kDa polypeptide, PetD), cytochrome f and the Rieske protein, while the 4 small subunits are PetG, PetL, PetM and PetN. The complex functions as a dimer. It depends on [2Fe-2S] cluster as a cofactor.

The protein resides in the cellular thylakoid membrane. The catalysed reaction is 2 oxidized [plastocyanin] + a plastoquinol + 2 H(+)(in) = 2 reduced [plastocyanin] + a plastoquinone + 4 H(+)(out). Component of the cytochrome b6-f complex, which mediates electron transfer between photosystem II (PSII) and photosystem I (PSI), cyclic electron flow around PSI, and state transitions. This Parasynechococcus marenigrum (strain WH8102) protein is Cytochrome b6-f complex iron-sulfur subunit.